Here is a 628-residue protein sequence, read N- to C-terminus: DNA ligase (628 aa).

NAD(+)-binding positions include 36 to 40 (DVEYD), 85 to 86 (SL), and E117. The N6-AMP-lysine intermediate role is filled by K119. 4 residues coordinate NAD(+): R140, E174, K309, and K333. Zn(2+)-binding residues include C427, C430, C446, and C452.

This sequence belongs to the NAD-dependent DNA ligase family. LigA subfamily. Requires Mg(2+) as cofactor. It depends on Mn(2+) as a cofactor.

The enzyme catalyses NAD(+) + (deoxyribonucleotide)n-3'-hydroxyl + 5'-phospho-(deoxyribonucleotide)m = (deoxyribonucleotide)n+m + AMP + beta-nicotinamide D-nucleotide.. In terms of biological role, DNA ligase that catalyzes the formation of phosphodiester linkages between 5'-phosphoryl and 3'-hydroxyl groups in double-stranded DNA using NAD as a coenzyme and as the energy source for the reaction. It is essential for DNA replication and repair of damaged DNA. In Tropheryma whipplei (strain TW08/27) (Whipple's bacillus), this protein is DNA ligase.